Reading from the N-terminus, the 289-residue chain is MDVTWTVKYITEFVGTALLIIMGNGAVANVELKGTKAHAQSWMIIGWGYGLGVMLPAVAFGNITSQINPAFTLGLAASGLFPWAHVAQYIIAQVLGAMFGQLLIVMVYRPYYLKTQNPNAILGTFSTIDNVDDNSEKTRLGATINGFLNEFLGSFVLFFGAVAATNIFFGSQSITWMTNYLKGQGADVSSSDVMNQIWVQASGASASKMIAHLFLGFLVMGLVVALGGPTGPGLNPARDFGPRLVHSLLPKSVLGEAKGSSKWWYAWVPVLAPILASLAAVALFKMIYL.

A run of 2 helical transmembrane segments spans residues 10–30 (ITEFVGTALLIIMGNGAVANV) and 41–61 (SWMIIGWGYGLGVMLPAVAFG). The short motif at 68 to 70 (NPA) is the NPA 1 element. A run of 3 helical transmembrane segments spans residues 87-107 (AQYIIAQVLGAMFGQLLIVMV), 151-171 (FLGSFVLFFGAVAATNIFFGS), and 209-229 (MIAHLFLGFLVMGLVVALGGP). The NPA 2 signature appears at 235-237 (NPA). A helical membrane pass occupies residues 264-284 (WYAWVPVLAPILASLAAVALF).

It belongs to the MIP/aquaporin (TC 1.A.8) family.

The protein resides in the cell membrane. Its function is as follows. Mixed channel protein that transports both water and glycerol. In Lactococcus lactis subsp. cremoris (Streptococcus cremoris), this protein is Glycerol facilitator-aquaporin gla (gla).